A 465-amino-acid polypeptide reads, in one-letter code: MKHIVKHIHFVGIGGAGMSGIAEVLVNLGYAVSGSDLSRNAVTDRLEALGARIAIGHDAANIEGANAVVVSTAVRSDNPEVLAARHQGVPIVQRAVMLAELMRLKQGIAIAGTHGKTTTTSLVASVLAAGGLDPTFVIGGRLISAGANARLGTGDFIVAEADESDASFLNLYPVIEVITNIDADHMDTYGHDFARLKQAFIEFTQRLPFYGSAVVCVDDPNVRQIIPFISKPVVRYGLSPDAQVRAEDIDARDGRMHFTVIREGRAPLAVVLNMPGLHNVQNALAAIAIATDLGVSDDAIQLALAEFNGVGRRFQRYGEVPSADGGQYTLIDDYGHHPVEMAATIAAARGAFPGRRLVLAFQPHRYTRTRDCFDDFVNVLSTVDALVLTEVYAAGEAAIPTASGDALSRALRAVGKVDPVFVATVDDVPDALAKVAQNGDVVITMGAGSIGGVPAKLVQHIQQKA.

112–118 (GTHGKTT) is an ATP binding site.

This sequence belongs to the MurCDEF family.

Its subcellular location is the cytoplasm. The catalysed reaction is UDP-N-acetyl-alpha-D-muramate + L-alanine + ATP = UDP-N-acetyl-alpha-D-muramoyl-L-alanine + ADP + phosphate + H(+). Its pathway is cell wall biogenesis; peptidoglycan biosynthesis. Its function is as follows. Cell wall formation. This is UDP-N-acetylmuramate--L-alanine ligase from Burkholderia cenocepacia (strain HI2424).